A 178-amino-acid chain; its full sequence is GTP-dependent dephospho-CoA kinase (178 aa).

Positions 55, 57, 74, 76, and 127 each coordinate GTP.

This sequence belongs to the GTP-dependent DPCK family.

It carries out the reaction 3'-dephospho-CoA + GTP = GDP + CoA + H(+). The protein operates within cofactor biosynthesis; coenzyme A biosynthesis. Its function is as follows. Catalyzes the GTP-dependent phosphorylation of the 3'-hydroxyl group of dephosphocoenzyme A to form coenzyme A (CoA). The protein is GTP-dependent dephospho-CoA kinase of Saccharolobus islandicus (strain Y.N.15.51 / Yellowstone #2) (Sulfolobus islandicus).